The primary structure comprises 1038 residues: Pentatricopeptide repeat-containing protein At5g27270 (1038 aa).

Residues 23–38 (SRNSRISIKSSSSSSK) show a composition bias toward low complexity. The interval 23–69 (SRNSRISIKSSSSSSKVRPDPWSLSDGNPEKPKPRYERPKHPLSDDD) is disordered. The segment covering 50 to 69 (NPEKPKPRYERPKHPLSDDD) has biased composition (basic and acidic residues). 23 PPR repeats span residues 187–221 (SVVV…GCEP), 222–256 (DAVA…RILL), 257–291 (STSV…GVPP), 292–326 (NEFT…GFVP), 327–361 (EEVT…GIVP), 362–396 (SNYT…KIPA), 397–431 (DEVI…NLLA), 432–466 (DEKT…DIPL), 467–501 (SRFA…GLPD), 502–535 (ASSC…QVHF), 536–570 (DIEL…ARVK), 601–631 (DVMA…MFKT), 634–668 (GSSA…GLRM), 669–699 (EEET…AGES), 703–737 (GKSV…GCDP), 738–772 (GAVT…NIEL), 773–807 (DTVG…GVPC), 808–842 (SIQT…GLYL), 843–877 (DEKI…GIKP), 878–912 (GTPS…GRCT), 913–947 (DLST…GIPL), 948–982 (SHSH…GISP), and 983–1017 (DSAC…SVED).

The protein belongs to the PPR family. P subfamily.

The chain is Pentatricopeptide repeat-containing protein At5g27270 (EMB976) from Arabidopsis thaliana (Mouse-ear cress).